The primary structure comprises 179 residues: ATP synthase subunit delta (179 aa).

This sequence belongs to the ATPase delta chain family. In terms of assembly, F-type ATPases have 2 components, F(1) - the catalytic core - and F(0) - the membrane proton channel. F(1) has five subunits: alpha(3), beta(3), gamma(1), delta(1), epsilon(1). F(0) has three main subunits: a(1), b(2) and c(10-14). The alpha and beta chains form an alternating ring which encloses part of the gamma chain. F(1) is attached to F(0) by a central stalk formed by the gamma and epsilon chains, while a peripheral stalk is formed by the delta and b chains.

The protein resides in the cell inner membrane. Its function is as follows. F(1)F(0) ATP synthase produces ATP from ADP in the presence of a proton or sodium gradient. F-type ATPases consist of two structural domains, F(1) containing the extramembraneous catalytic core and F(0) containing the membrane proton channel, linked together by a central stalk and a peripheral stalk. During catalysis, ATP synthesis in the catalytic domain of F(1) is coupled via a rotary mechanism of the central stalk subunits to proton translocation. This protein is part of the stalk that links CF(0) to CF(1). It either transmits conformational changes from CF(0) to CF(1) or is implicated in proton conduction. The polypeptide is ATP synthase subunit delta (Paraburkholderia phytofirmans (strain DSM 17436 / LMG 22146 / PsJN) (Burkholderia phytofirmans)).